The sequence spans 208 residues: Uridine kinase (208 aa).

Residue 11–18 (GGTGSGKS) coordinates ATP.

Belongs to the uridine kinase family.

The protein resides in the cytoplasm. It catalyses the reaction uridine + ATP = UMP + ADP + H(+). It carries out the reaction cytidine + ATP = CMP + ADP + H(+). Its pathway is pyrimidine metabolism; CTP biosynthesis via salvage pathway; CTP from cytidine: step 1/3. It participates in pyrimidine metabolism; UMP biosynthesis via salvage pathway; UMP from uridine: step 1/1. The polypeptide is Uridine kinase (Clostridium perfringens (strain ATCC 13124 / DSM 756 / JCM 1290 / NCIMB 6125 / NCTC 8237 / Type A)).